A 274-amino-acid polypeptide reads, in one-letter code: Pyridoxal phosphate homeostasis protein (274 aa).

The residue at position 6 (Ser6) is a Phosphoserine. Lys47 is modified (N6-(pyridoxal phosphate)lysine). Tyr69 is modified (phosphotyrosine). N6-succinyllysine is present on Lys125. Phosphoserine is present on residues Ser226 and Ser244.

This sequence belongs to the pyridoxal phosphate-binding protein YggS/PROSC family.

Its function is as follows. Pyridoxal 5'-phosphate (PLP)-binding protein, which may be involved in intracellular homeostatic regulation of pyridoxal 5'-phosphate (PLP), the active form of vitamin B6. In Mus musculus (Mouse), this protein is Pyridoxal phosphate homeostasis protein.